Consider the following 497-residue polypeptide: Histone-lysine N-methyltransferase ASHR3 (497 aa).

A PHD-type zinc finger spans residues 118-186 (MVDCLVCHKP…QWRCVKCPMA (69 aa)). The 44-residue stretch at 283-326 (DGVGCTNCGPNCDRSCVCRVQCISCSKGCSCPESCGNRPFRKEK) folds into the AWS domain. Residues 326–443 (KKIKIVKTEH…AGEPLTYDYR (118 aa)) enclose the SET domain. Residues 449–465 (PEVKCNCGSENCQGYLG) enclose the Post-SET domain.

The protein belongs to the class V-like SAM-binding methyltransferase superfamily. Histone-lysine methyltransferase family. SET2 subfamily. As to quaternary structure, interacts with AMS/bHLH21 by its SET domain and PHD finger. In terms of tissue distribution, expressed in roots, flowers and buds, the anther and in stamen filaments.

The protein resides in the nucleus. Its subcellular location is the chromosome. The enzyme catalyses L-lysyl-[histone] + S-adenosyl-L-methionine = N(6)-methyl-L-lysyl-[histone] + S-adenosyl-L-homocysteine + H(+). Histone methyltransferase. Involved in stamen development. The protein is Histone-lysine N-methyltransferase ASHR3 (ASHR3) of Arabidopsis thaliana (Mouse-ear cress).